Reading from the N-terminus, the 210-residue chain is Na(+)-translocating NADH-quinone reductase subunit D (210 aa).

Transmembrane regions (helical) follow at residues 14-34 (PIVS…ALAV), 42-62 (LVMT…ISML), 72-92 (IIVQ…VLQA), 103-123 (VFVG…AYAM), 131-151 (FMDG…VGFV), and 178-198 (NGLL…IWII).

This sequence belongs to the NqrDE/RnfAE family. In terms of assembly, composed of six subunits; NqrA, NqrB, NqrC, NqrD, NqrE and NqrF.

The protein resides in the cell inner membrane. The enzyme catalyses a ubiquinone + n Na(+)(in) + NADH + H(+) = a ubiquinol + n Na(+)(out) + NAD(+). In terms of biological role, NQR complex catalyzes the reduction of ubiquinone-1 to ubiquinol by two successive reactions, coupled with the transport of Na(+) ions from the cytoplasm to the periplasm. NqrA to NqrE are probably involved in the second step, the conversion of ubisemiquinone to ubiquinol. The sequence is that of Na(+)-translocating NADH-quinone reductase subunit D from Shewanella woodyi (strain ATCC 51908 / MS32).